The sequence spans 139 residues: MEESLELEKLPRIITDVLKIVLCTALIALAIVLIIALVKITYTLSMMVLNTSSVVPYDVAEQAVMFFLYFGFIGLIVQYFKSGYHFPLRYFIYAGITAMLRLIIVNHESSVDTILFAGAILIMVIALCLVLYSNKLKNI.

Helical transmembrane passes span 20 to 40 (IVLC…LVKI), 60 to 80 (AEQA…VQYF), 85 to 105 (HFPL…LIIV), and 111 to 131 (VDTI…CLVL).

The protein belongs to the PsiE family.

Its subcellular location is the cell inner membrane. The protein is Protein PsiE homolog of Haemophilus influenzae (strain 86-028NP).